The primary structure comprises 840 residues: Leucine-zipper-like transcriptional regulator 1 (840 aa).

An N-acetylalanine modification is found at alanine 2. Kelch repeat units lie at residues 79–128, 130–185, 187–238, 239–285, 295–341, and 399–450; these read AIYV…VYGS, MFVF…VYSD, LWIF…VCRD, KMFV…QRRY, HLYV…PERA, and AMYI…FVLG. BTB domains follow at residues 443 to 537 and 667 to 736; these read CDVE…KYPR and CDIT…NMPP.

Belongs to the LZTR1 family. As to quaternary structure, homodimer. Component of the BCR(LZTR1) E3 ubiquitin ligase complex, at least composed of CUL3, LZTR1 and RBX1. Interacts with Ras (K-Ras/KRAS, N-Ras/NRAS and H-Ras/HRAS). Interacts with RAF1. Interacts with SHOC2. Interacts with PPP1CB. In terms of processing, phosphorylated on tyrosine upon induction of apoptosis, leading to its degradation by the proteasome.

It is found in the endomembrane system. Its subcellular location is the recycling endosome. It localises to the golgi apparatus. Its pathway is protein modification; protein ubiquitination. In terms of biological role, substrate-specific adapter of a BCR (BTB-CUL3-RBX1) E3 ubiquitin-protein ligase complex that mediates ubiquitination of Ras (K-Ras/KRAS, N-Ras/NRAS and H-Ras/HRAS). Is a negative regulator of RAS-MAPK signaling that acts by controlling Ras levels and decreasing Ras association with membranes. The polypeptide is Leucine-zipper-like transcriptional regulator 1 (Homo sapiens (Human)).